The chain runs to 405 residues: Probable tRNA sulfurtransferase (405 aa).

Residues 60–165 form the THUMP domain; that stretch reads EGVIERLRHV…QDAIYLTNQV (106 aa). ATP contacts are provided by residues 183–184, 208–209, Arg265, Gly287, and Gln296; these read ML and HF.

The protein belongs to the ThiI family.

It localises to the cytoplasm. The enzyme catalyses [ThiI sulfur-carrier protein]-S-sulfanyl-L-cysteine + a uridine in tRNA + 2 reduced [2Fe-2S]-[ferredoxin] + ATP + H(+) = [ThiI sulfur-carrier protein]-L-cysteine + a 4-thiouridine in tRNA + 2 oxidized [2Fe-2S]-[ferredoxin] + AMP + diphosphate. It carries out the reaction [ThiS sulfur-carrier protein]-C-terminal Gly-Gly-AMP + S-sulfanyl-L-cysteinyl-[cysteine desulfurase] + AH2 = [ThiS sulfur-carrier protein]-C-terminal-Gly-aminoethanethioate + L-cysteinyl-[cysteine desulfurase] + A + AMP + 2 H(+). It participates in cofactor biosynthesis; thiamine diphosphate biosynthesis. Catalyzes the ATP-dependent transfer of a sulfur to tRNA to produce 4-thiouridine in position 8 of tRNAs, which functions as a near-UV photosensor. Also catalyzes the transfer of sulfur to the sulfur carrier protein ThiS, forming ThiS-thiocarboxylate. This is a step in the synthesis of thiazole, in the thiamine biosynthesis pathway. The sulfur is donated as persulfide by IscS. This Latilactobacillus sakei subsp. sakei (strain 23K) (Lactobacillus sakei subsp. sakei) protein is Probable tRNA sulfurtransferase.